A 370-amino-acid polypeptide reads, in one-letter code: ATP/GTP phosphatase (370 aa).

The catalysed reaction is ATP + H2O = ADP + phosphate + H(+). It catalyses the reaction GTP + H2O = GDP + phosphate + H(+). Has nucleotide phosphatase activity toward ATP and GTP, but not toward CTP, TTP and ADP. The sequence is that of ATP/GTP phosphatase from Helicobacter pylori (strain ATCC 700392 / 26695) (Campylobacter pylori).